The primary structure comprises 292 residues: NAD kinase (292 aa).

The active-site Proton acceptor is the aspartate 72. NAD(+)-binding positions include 72–73 (DG), 146–147 (NE), histidine 157, arginine 174, aspartate 176, and 187–192 (TAYSLS).

This sequence belongs to the NAD kinase family. A divalent metal cation serves as cofactor.

Its subcellular location is the cytoplasm. It carries out the reaction NAD(+) + ATP = ADP + NADP(+) + H(+). Involved in the regulation of the intracellular balance of NAD and NADP, and is a key enzyme in the biosynthesis of NADP. Catalyzes specifically the phosphorylation on 2'-hydroxyl of the adenosine moiety of NAD to yield NADP. This chain is NAD kinase, found in Shewanella loihica (strain ATCC BAA-1088 / PV-4).